A 270-amino-acid chain; its full sequence is Cross-pathway control protein 1 (270 aa).

2 disordered regions span residues 114–135 and 153–213; these read QAQA…QTQP and QTVH…IIVE. Low complexity predominate over residues 184-195; that stretch reads SVSPPSGRHSSV. A bZIP domain is found at 216–270; that stretch reads SDVVAMKRARNTLAARKSRERKAQRLEELEAKIEELIAERDRWKNLALAHGASTE. Residues 222–240 form a basic motif region; the sequence is KRARNTLAARKSRERKAQR. Positions 241–248 are leucine-zipper; the sequence is LEELEAKI.

The protein belongs to the bZIP family. GCN4 subfamily. In terms of assembly, binds DNA as a dimer.

The protein resides in the nucleus. Its function is as follows. In N.crassa grown under amino acid starvation conditions, this protein is required for increasing the transcription of the genes coding for many amino acid biosynthetic pathways enzymes. This transcription factor binds and recognize the DNA sequence: 5'-TGACTC-3'. This chain is Cross-pathway control protein 1 (cpc-1), found in Neurospora crassa (strain ATCC 24698 / 74-OR23-1A / CBS 708.71 / DSM 1257 / FGSC 987).